Consider the following 690-residue polypeptide: MATNDLFPPEPPLPDPAHVAQLRRALHEHAHHYYVEDAPTIPDAEYDRMFQELQAIEAQHPELITPDSPTQRVGGRALEQFASVRHAVPMLSIRTETDTEASGARNFDTRVRRELGLDEAAPAVAYVAEPKFDGLAMNLRYESGILVQAATRGDGEVGEDVTQNVRTIGQIPLRLPADAPSILEVRGEVYMRRDDFEKLNEQQRARGQKTFVNPRNAAAGAVRQLDPAIAAQRPLSFFAYGLGEVTPEQAGGPAFGTHYELLQALKTWGFPVSALVGLAQGATELVAYYESIARQRDALPFDIDGVVYKVNSLALQRRMGFVTREPRWAVAHKFPAQEQFTTVLDIDVQVGRTGKLTPVAKLAPVFVGGVTVTNATLHNEDEARRKDVRVGDTVIVRRAGDVIPEVVSVLLDKRQPGATEFTMPRQCPVCGSAAVREEGEVDYRCTGGLFCSAQRKQAILHFAQRRAVEVEGLGEKLVDQLVDGHVIRILPDLYRLGLTALASLDRMADKSAQNILQALEKSKQTTLPRFLFGLGIRHVGEATAKELARHFGSLDAVMDASLEQLLQVNDIGPIVAQSLRTFFDQPHNREVVEQLRACGVTWQEGPPAPVTPTPLSGKTFVITGTLPSMSRDEAKDLIEAAGGKVAGSVSKKTTFVVAGTEAGSKLTKAQELGVAVLDEAGLKELLDGHS.

Residues 43–47 (DAEYD), 92–93 (SI), and Glu-129 each bind NAD(+). Lys-131 (N6-AMP-lysine intermediate) is an active-site residue. The NAD(+) site is built by Arg-152, Glu-188, Lys-309, and Lys-333. Zn(2+) contacts are provided by Cys-427, Cys-430, Cys-445, and Cys-451. The 81-residue stretch at 610-690 (VTPTPLSGKT…GLKELLDGHS (81 aa)) folds into the BRCT domain.

It belongs to the NAD-dependent DNA ligase family. LigA subfamily. Mg(2+) is required as a cofactor. Mn(2+) serves as cofactor.

The enzyme catalyses NAD(+) + (deoxyribonucleotide)n-3'-hydroxyl + 5'-phospho-(deoxyribonucleotide)m = (deoxyribonucleotide)n+m + AMP + beta-nicotinamide D-nucleotide.. In terms of biological role, DNA ligase that catalyzes the formation of phosphodiester linkages between 5'-phosphoryl and 3'-hydroxyl groups in double-stranded DNA using NAD as a coenzyme and as the energy source for the reaction. It is essential for DNA replication and repair of damaged DNA. The polypeptide is DNA ligase (Albidiferax ferrireducens (strain ATCC BAA-621 / DSM 15236 / T118) (Rhodoferax ferrireducens)).